The sequence spans 248 residues: Proteasome subunit alpha (248 aa).

The segment at 229–248 is disordered; the sequence is LLEADGATTEAESSAEEEDE.

The protein belongs to the peptidase T1A family. In terms of assembly, the 20S proteasome core is composed of 14 alpha and 14 beta subunits that assemble into four stacked heptameric rings, resulting in a barrel-shaped structure. The two inner rings, each composed of seven catalytic beta subunits, are sandwiched by two outer rings, each composed of seven alpha subunits. The catalytic chamber with the active sites is on the inside of the barrel. Has a gated structure, the ends of the cylinder being occluded by the N-termini of the alpha-subunits. Is capped by the proteasome-associated ATPase, ARC.

It localises to the cytoplasm. The protein operates within protein degradation; proteasomal Pup-dependent pathway. Its activity is regulated as follows. The formation of the proteasomal ATPase ARC-20S proteasome complex, likely via the docking of the C-termini of ARC into the intersubunit pockets in the alpha-rings, may trigger opening of the gate for substrate entry. Interconversion between the open-gate and close-gate conformations leads to a dynamic regulation of the 20S proteasome proteolysis activity. Its function is as follows. Component of the proteasome core, a large protease complex with broad specificity involved in protein degradation. In Streptomyces scabiei (strain 87.22), this protein is Proteasome subunit alpha.